We begin with the raw amino-acid sequence, 203 residues long: Dephospho-CoA kinase (203 aa).

The DPCK domain occupies S3 to A201. An ATP-binding site is contributed by G11–T16.

The protein belongs to the CoaE family.

Its subcellular location is the cytoplasm. The catalysed reaction is 3'-dephospho-CoA + ATP = ADP + CoA + H(+). Its pathway is cofactor biosynthesis; coenzyme A biosynthesis; CoA from (R)-pantothenate: step 5/5. Its function is as follows. Catalyzes the phosphorylation of the 3'-hydroxyl group of dephosphocoenzyme A to form coenzyme A. The chain is Dephospho-CoA kinase from Burkholderia pseudomallei (strain 1710b).